The following is a 133-amino-acid chain: Small ribosomal subunit protein uS8 (133 aa).

The protein belongs to the universal ribosomal protein uS8 family. Part of the 30S ribosomal subunit.

In terms of biological role, one of the primary rRNA binding proteins, it binds directly to 16S rRNA central domain where it helps coordinate assembly of the platform of the 30S subunit. The polypeptide is Small ribosomal subunit protein uS8 (Staphylothermus marinus (strain ATCC 43588 / DSM 3639 / JCM 9404 / F1)).